A 329-amino-acid polypeptide reads, in one-letter code: Palmitoyltransferase pfa3 (329 aa).

Transmembrane regions (helical) follow at residues 14 to 34 (VLVILAKYCMQIIALSLMSGV), 49 to 69 (VGIIILFLYIMIVTCYVLTNL), 141 to 161 (FFFLECFYLNLYSICVLYSTF), 177 to 197 (AIYLVFWGFLFAFAVGMSIVM), and 243 to 263 (IMGKSPFLWLLPFPNSIGEGV). Positions 97 to 147 (RFCEKCQEYKCDRSHHCSQCNKCILRMDHHCMWFKNCVGFRNHKFFFLECF) constitute a DHHC domain.

Belongs to the DHHC palmitoyltransferase family. PFA3 subfamily. In terms of processing, autopalmitoylated.

The protein resides in the vacuole membrane. The protein localises to the golgi apparatus membrane. It carries out the reaction L-cysteinyl-[protein] + hexadecanoyl-CoA = S-hexadecanoyl-L-cysteinyl-[protein] + CoA. Palmitoyltransferase specific for VAC8. Palmitoylates VAC8 at one or more of its N-terminal cysteine residues, which is required for its proper membrane localization. This is Palmitoyltransferase pfa3 (pfa3) from Schizosaccharomyces pombe (strain 972 / ATCC 24843) (Fission yeast).